The following is a 249-amino-acid chain: Secretion system apparatus lipoprotein SsaJ (249 aa).

The N-terminal stretch at 1–18 is a signal peptide; the sequence is MKVHRIVFLTVLTFFLTA. A lipid anchor (N-palmitoyl cysteine) is attached at cysteine 19. The S-diacylglycerol cysteine moiety is linked to residue cysteine 19. A helical membrane pass occupies residues 225 to 245; it reads LMLSLTGLLLGVGILIGYFCL.

This sequence belongs to the YscJ lipoprotein family.

It is found in the cell outer membrane. In terms of biological role, component of Salmonella pathogenicity island 2 (SPI-2) type III secretion system, required for secretion of some type III-secreted effectors including the SpvB exotoxin. The sequence is that of Secretion system apparatus lipoprotein SsaJ (ssaJ) from Salmonella typhimurium (strain 14028s / SGSC 2262).